Consider the following 256-residue polypeptide: uncharacterized protein (256 aa).

An NADP(+)-binding site is contributed by 9 to 33; it reads VTGGGQGIGAAIAQLFAENGMKVVI. A substrate-binding site is contributed by S140. The Proton acceptor role is filled by Y153.

Belongs to the short-chain dehydrogenases/reductases (SDR) family.

This is an uncharacterized protein from Thermotoga maritima (strain ATCC 43589 / DSM 3109 / JCM 10099 / NBRC 100826 / MSB8).